The following is a 128-amino-acid chain: Large ribosomal subunit protein eL22 (128 aa).

Thr62 carries the phosphothreonine modification. The residue at position 66 (Ser66) is a Phosphoserine. Lys69 is modified (N6-succinyllysine).

Belongs to the eukaryotic ribosomal protein eL22 family. As to quaternary structure, component of the large ribosomal subunit.

It is found in the cytoplasm. Its function is as follows. Component of the large ribosomal subunit. The ribosome is a large ribonucleoprotein complex responsible for the synthesis of proteins in the cell. This Sus scrofa (Pig) protein is Large ribosomal subunit protein eL22 (RPL22).